A 55-amino-acid polypeptide reads, in one-letter code: Spermatid nuclear transition protein 1 (55 aa).

Positions 1–42 (MSTSRKLKSQGTRRGKNRTPHKGVKRGCSKRKYRKSSLKSRK) are enriched in basic residues. The tract at residues 1-55 (MSTSRKLKSQGTRRGKNRTPHKGVKRGCSKRKYRKSSLKSRKRCDDANRNFRSHL) is disordered. Phosphoserine occurs at positions 9, 36, 37, and 40.

Belongs to the nuclear transition protein 1 family. Testis.

It is found in the nucleus. It localises to the chromosome. Functionally, plays a key role in the replacement of histones to protamine in the elongating spermatids of mammals. In condensing spermatids, loaded onto the nucleosomes, where it promotes the recruitment and processing of protamines, which are responsible for histone eviction. The polypeptide is Spermatid nuclear transition protein 1 (TNP1) (Ovis aries (Sheep)).